The chain runs to 272 residues: MALAKRIIPCLDVKDGRVVKGVRFRGLRDAGDPAELAHHYYRHGADEIVFLDISASPEGRRLMVDVVRRTAEKVFIPMTVGGGISDVEDFRRALTAGADKVSVNTAAVENPELISEAADIFGSQCVVVAIDAKREPLKPEHEHVADHIFSNDDGEYWFRVYVRGGREPVDLDAITWAKRVEELGAGEILLTSIDADGTQEGYDIELTREVCNAVSIPVIASGGCGHPKHMVEVFKEADADAALAASIFHYGKFTIEEVKEHLAERGVRVRQC.

Residues Asp-12 and Asp-131 contribute to the active site.

The protein belongs to the HisA/HisF family. Heterodimer of HisH and HisF.

It is found in the cytoplasm. It carries out the reaction 5-[(5-phospho-1-deoxy-D-ribulos-1-ylimino)methylamino]-1-(5-phospho-beta-D-ribosyl)imidazole-4-carboxamide + L-glutamine = D-erythro-1-(imidazol-4-yl)glycerol 3-phosphate + 5-amino-1-(5-phospho-beta-D-ribosyl)imidazole-4-carboxamide + L-glutamate + H(+). Its pathway is amino-acid biosynthesis; L-histidine biosynthesis; L-histidine from 5-phospho-alpha-D-ribose 1-diphosphate: step 5/9. IGPS catalyzes the conversion of PRFAR and glutamine to IGP, AICAR and glutamate. The HisF subunit catalyzes the cyclization activity that produces IGP and AICAR from PRFAR using the ammonia provided by the HisH subunit. The protein is Imidazole glycerol phosphate synthase subunit HisF of Methanopyrus kandleri (strain AV19 / DSM 6324 / JCM 9639 / NBRC 100938).